The sequence spans 208 residues: OVARIAN TUMOR DOMAIN-containing deubiquitinating enzyme 2 (208 aa).

The region spanning 5 to 127 is the OTU domain; it reads IVRRVIPSDN…GLHYDALALS (123 aa). The active site involves D13. C16 acts as the Nucleophile in catalysis. Residues H120 and H201 contribute to the active site.

The protein belongs to the peptidase C85 family.

The enzyme catalyses Thiol-dependent hydrolysis of ester, thioester, amide, peptide and isopeptide bonds formed by the C-terminal Gly of ubiquitin (a 76-residue protein attached to proteins as an intracellular targeting signal).. Functionally, hydrolase that can remove conjugated ubiquitin from proteins in vitro and may therefore play an important regulatory role at the level of protein turnover by preventing degradation. Cysteine protease with a preference for 'Lys-63' and 'Lys-48' -linked ubiquitin (UB) tetramers as substrates. This Arabidopsis thaliana (Mouse-ear cress) protein is OVARIAN TUMOR DOMAIN-containing deubiquitinating enzyme 2.